The primary structure comprises 1311 residues: DENN domain-containing protein 5B (1311 aa).

The uDENN domain maps to 53 to 270 (ATAAGENFDQ…EVPLPASGRS (218 aa)). The segment covering 154–165 (QAEHNTSAQNCT) has biased composition (polar residues). Positions 154-201 (QAEHNTSAQNCTSSSSSSSSSSSSSSMDSLSSSLDDVDSPSAHGGRRT) are disordered. Over residues 166 to 187 (SSSSSSSSSSSSSSMDSLSSSL) the composition is skewed to low complexity. Residues 289 to 452 (ELPLADFPLA…AVMSLQTSVL (164 aa)) enclose the cDENN domain. The region spanning 454–619 (KELKSTSLRE…DNKIMSQWEE (166 aa)) is the dDENN domain. Positions 809-969 (LEENTLIASL…DYFCFTSVFT (161 aa)) constitute an RUN 1 domain. The interval 854–874 (EQQLESPVSNGQERRKTESSV) is disordered. A helical transmembrane segment spans residues 962-982 (FCFTSVFTTIMIPYRAVIIPI). The PLAT domain maps to 973–1081 (IPYRAVIIPI…DDGSLERVLI (109 aa)). The RUN 2 domain occupies 1155–1306 (TVLLCGEGGL…FPITLETSLT (152 aa)).

This sequence belongs to the RAB6IP1 family.

The protein resides in the membrane. Functionally, guanine nucleotide exchange factor (GEF) which may activate the small GTPases Rab. May promote the exchange of GDP to GTP, converting inactive GDP-bound Rab proteins into their active GTP-bound form. In Danio rerio (Zebrafish), this protein is DENN domain-containing protein 5B (dennd5b).